We begin with the raw amino-acid sequence, 449 residues long: Adenylosuccinate synthetase isozyme 1 B (449 aa).

Residues 34 to 40 (GDEGKGK) and 62 to 64 (GHT) each bind GTP. Catalysis depends on D35, which acts as the Proton acceptor. Positions 35 and 62 each coordinate Mg(2+). Residue D35 participates in substrate binding. IMP contacts are provided by residues 35-38 (DEGK), 60-63 (NAGH), T155, R169, N248, T263, and R327. Catalysis depends on H63, which acts as the Proton donor. Position 323–329 (323–329 (VTTGRKR)) interacts with substrate. Residues R329, 355–357 (KLD), and 437–440 (GVGK) each bind GTP.

Belongs to the adenylosuccinate synthetase family. In terms of assembly, homodimer. Mg(2+) serves as cofactor.

The protein resides in the cytoplasm. The catalysed reaction is IMP + L-aspartate + GTP = N(6)-(1,2-dicarboxyethyl)-AMP + GDP + phosphate + 2 H(+). The protein operates within purine metabolism; AMP biosynthesis via de novo pathway; AMP from IMP: step 1/2. Component of the purine nucleotide cycle (PNC), which interconverts IMP and AMP to regulate the nucleotide levels in various tissues, and which contributes to glycolysis and ammoniagenesis. Catalyzes the first committed step in the biosynthesis of AMP from IMP. The sequence is that of Adenylosuccinate synthetase isozyme 1 B (adss1b) from Salmo salar (Atlantic salmon).